The sequence spans 475 residues: Methyltransferase-like protein 25B (475 aa).

Residues 185–210 (NKRLVARAQRLDQELLQALDKMEKRH) adopt a coiled-coil conformation. The helical transmembrane segment at 406 to 426 (VVAFFSLALLLAPLVETLILL) threads the bilayer.

This sequence belongs to the METTL25 family.

The protein resides in the membrane. The chain is Methyltransferase-like protein 25B from Rattus norvegicus (Rat).